The following is a 160-amino-acid chain: Putative 4-hydroxy-4-methyl-2-oxoglutarate aldolase (160 aa).

Substrate is bound by residues 75-78 and arginine 97; that span reads GDQL. Residue aspartate 98 participates in a divalent metal cation binding.

The protein belongs to the class II aldolase/RraA-like family. As to quaternary structure, homotrimer. Requires a divalent metal cation as cofactor.

It catalyses the reaction 4-hydroxy-4-methyl-2-oxoglutarate = 2 pyruvate. The catalysed reaction is oxaloacetate + H(+) = pyruvate + CO2. In terms of biological role, catalyzes the aldol cleavage of 4-hydroxy-4-methyl-2-oxoglutarate (HMG) into 2 molecules of pyruvate. Also contains a secondary oxaloacetate (OAA) decarboxylase activity due to the common pyruvate enolate transition state formed following C-C bond cleavage in the retro-aldol and decarboxylation reactions. The protein is Putative 4-hydroxy-4-methyl-2-oxoglutarate aldolase of Vibrio parahaemolyticus serotype O3:K6 (strain RIMD 2210633).